Reading from the N-terminus, the 34-residue chain is Photosystem II reaction center protein M (34 aa).

Residues 5 to 25 (ILAFIATVLFILVPTAFLLII) traverse the membrane as a helical segment.

Belongs to the PsbM family. PSII is composed of 1 copy each of membrane proteins PsbA, PsbB, PsbC, PsbD, PsbE, PsbF, PsbH, PsbI, PsbJ, PsbK, PsbL, PsbM, PsbT, PsbX, PsbY, PsbZ, Psb30/Ycf12, at least 3 peripheral proteins of the oxygen-evolving complex and a large number of cofactors. It forms dimeric complexes.

It localises to the plastid. Its subcellular location is the chloroplast thylakoid membrane. In terms of biological role, one of the components of the core complex of photosystem II (PSII). PSII is a light-driven water:plastoquinone oxidoreductase that uses light energy to abstract electrons from H(2)O, generating O(2) and a proton gradient subsequently used for ATP formation. It consists of a core antenna complex that captures photons, and an electron transfer chain that converts photonic excitation into a charge separation. This subunit is found at the monomer-monomer interface. The protein is Photosystem II reaction center protein M of Piper cenocladum (Ant piper).